The chain runs to 235 residues: Ribonuclease PH (235 aa).

Residues Arg86 and 124–126 (GTR) each bind phosphate.

The protein belongs to the RNase PH family. Homohexameric ring arranged as a trimer of dimers.

It carries out the reaction tRNA(n+1) + phosphate = tRNA(n) + a ribonucleoside 5'-diphosphate. In terms of biological role, phosphorolytic 3'-5' exoribonuclease that plays an important role in tRNA 3'-end maturation. Removes nucleotide residues following the 3'-CCA terminus of tRNAs; can also add nucleotides to the ends of RNA molecules by using nucleoside diphosphates as substrates, but this may not be physiologically important. Probably plays a role in initiation of 16S rRNA degradation (leading to ribosome degradation) during starvation. This chain is Ribonuclease PH, found in Francisella tularensis subsp. novicida (strain U112).